The primary structure comprises 399 residues: Stomatin-like protein 1 (399 aa).

The Tyrosine-type lysosomal sorting signal signature appears at 6 to 10; it reads GYRAL. S28 carries the post-translational modification Phosphoserine. Residues 58 to 78 traverse the membrane as a helical; Signal-anchor for type III membrane protein segment; sequence LVSVLGFLLLLLTFPISGWFA. The Cytoplasmic segment spans residues 79-399; the sequence is LKIVPTYERM…KLEAVLKALK (321 aa). The region spanning 288–399 is the SCP2 domain; sequence KQPVAEGLLT…KLEAVLKALK (112 aa).

The protein belongs to the band 7/mec-2 family. As to quaternary structure, interacts with STOM; may redistribute STOM from the plasma membrane to late endosomes. As to expression, expressed in dorsal root ganglion neurons.

The protein localises to the membrane. Its subcellular location is the cytoplasmic vesicle. It localises to the cell membrane. It is found in the late endosome membrane. The protein resides in the membrane raft. May play a role in cholesterol transfer to late endosomes. May play a role in modulating membrane acid-sensing ion channels. Can specifically inhibit proton-gated current of ASIC1 isoform 1. Can increase inactivation speed of ASIC3. May be involved in regulation of proton sensing in dorsal root ganglions. This Mus musculus (Mouse) protein is Stomatin-like protein 1 (Stoml1).